Consider the following 132-residue polypeptide: S-protein homolog 19 (132 aa).

Residues 1–26 (MSGSLAFHIIMSVTFMVFFFGGLCEA) form the signal peptide. An N-linked (GlcNAc...) asparagine glycan is attached at N87.

The protein belongs to the plant self-incompatibility (S1) protein family.

Its subcellular location is the secreted. The chain is S-protein homolog 19 from Arabidopsis thaliana (Mouse-ear cress).